Consider the following 523-residue polypeptide: FAD:protein FMN transferase (523 aa).

Helical transmembrane passes span 88 to 108, 118 to 138, and 169 to 189; these read LLAG…VALA, GGAA…LVLL, and GLAL…TAPA. Residues 277-279 and aspartate 336 contribute to the FAD site; that span reads LFD. Residue alanine 339 coordinates Mg(2+). Residues lysine 342 and 423–425 contribute to the FAD site; that span reads HII. Residues aspartate 450 and threonine 454 each coordinate Mg(2+).

This sequence in the N-terminal section; belongs to the RseC family. In the C-terminal section; belongs to the ApbE family. Mg(2+) serves as cofactor.

It localises to the cell membrane. It carries out the reaction L-threonyl-[protein] + FAD = FMN-L-threonyl-[protein] + AMP + H(+). Functionally, flavin transferase that catalyzes the transfer of the FMN moiety of FAD and its covalent binding to the hydroxyl group of a threonine residue in a target flavoprotein. Is likely involved in the modification of RnfG and RnfD. Required for nitrogen fixation. This Rhodobacter capsulatus (Rhodopseudomonas capsulata) protein is FAD:protein FMN transferase.